The primary structure comprises 348 residues: sn-glycerol-3-phosphate import ATP-binding protein UgpC (348 aa).

The region spanning 4-235 (IQLSNIKKQY…PETTFVADFI (232 aa)) is the ABC transporter domain. 37–44 (GPSGCGKS) contributes to the ATP binding site.

Belongs to the ABC transporter superfamily. sn-glycerol-3-phosphate importer (TC 3.A.1.1.3) family. In terms of assembly, the complex is composed of two ATP-binding proteins (UgpC), two transmembrane proteins (UgpA and UgpE) and a solute-binding protein (UgpB).

Its subcellular location is the cell inner membrane. The catalysed reaction is sn-glycerol 3-phosphate(out) + ATP + H2O = sn-glycerol 3-phosphate(in) + ADP + phosphate + H(+). In terms of biological role, part of the ABC transporter complex UgpBAEC involved in sn-glycerol-3-phosphate (G3P) import. Responsible for energy coupling to the transport system. This chain is sn-glycerol-3-phosphate import ATP-binding protein UgpC, found in Bartonella quintana (strain Toulouse) (Rochalimaea quintana).